Here is a 601-residue protein sequence, read N- to C-terminus: Abscisic acid cluster transcription factor abl7 (601 aa).

The zn(2)-C6 fungal-type DNA-binding region spans 13–40; it reads CDECRRRKLKCDRVRPQCGTCALSESEC.

It is found in the nucleus. Transcription factor that regulates the expression of the gene cluster that mediates the biosynthesis of abscisic acid (ABA), a phytohormone that acts antagonistically toward salicylic acid (SA), jasmonic acid (JA) and ethylene (ETH) signaling, to impede plant defense responses. This Leptosphaeria maculans (strain JN3 / isolate v23.1.3 / race Av1-4-5-6-7-8) (Blackleg fungus) protein is Abscisic acid cluster transcription factor abl7.